The primary structure comprises 576 residues: 60 kDa heat shock protein homolog 2, mitochondrial (576 aa).

The transit peptide at 1–61 (MMRMFRYTNT…AVTMGPKGRN (61 aa)) directs the protein to the mitochondrion.

It belongs to the chaperonin (HSP60) family. In terms of tissue distribution, first detectable expression is seen in the posterior part of the dorsal tracheal trunk at stage 14-15, which marks the beginning of terminal tracheation. In the larval gut, expression in proventriculus is stronger than in midgut and hindgut. Malpighian tubules shows low expression and late third instar larval imaginal disks and brain showed moderate expression. In larval ovary and testis, expression is strong in the posterior region.

The protein localises to the mitochondrion matrix. In terms of biological role, prevents misfolding and promotes the refolding and proper assembly of unfolded polypeptides generated under stress conditions. Essential for proper development of trachea, spermatogonia and spermatocytes. The polypeptide is 60 kDa heat shock protein homolog 2, mitochondrial (Hsp60C) (Drosophila melanogaster (Fruit fly)).